The chain runs to 249 residues: Segregation and condensation protein A (249 aa).

Belongs to the ScpA family. Component of a cohesin-like complex composed of ScpA, ScpB and the Smc homodimer, in which ScpA and ScpB bind to the head domain of Smc. The presence of the three proteins is required for the association of the complex with DNA.

It localises to the cytoplasm. Functionally, participates in chromosomal partition during cell division. May act via the formation of a condensin-like complex containing Smc and ScpB that pull DNA away from mid-cell into both cell halves. The polypeptide is Segregation and condensation protein A (Listeria welshimeri serovar 6b (strain ATCC 35897 / DSM 20650 / CCUG 15529 / CIP 8149 / NCTC 11857 / SLCC 5334 / V8)).